The following is a 622-amino-acid chain: DNA mismatch repair protein MutL (622 aa).

Belongs to the DNA mismatch repair MutL/HexB family.

Functionally, this protein is involved in the repair of mismatches in DNA. It is required for dam-dependent methyl-directed DNA mismatch repair. May act as a 'molecular matchmaker', a protein that promotes the formation of a stable complex between two or more DNA-binding proteins in an ATP-dependent manner without itself being part of a final effector complex. The chain is DNA mismatch repair protein MutL from Clostridium acetobutylicum (strain ATCC 824 / DSM 792 / JCM 1419 / IAM 19013 / LMG 5710 / NBRC 13948 / NRRL B-527 / VKM B-1787 / 2291 / W).